We begin with the raw amino-acid sequence, 334 residues long: Guanine nucleotide-binding protein subunit beta-like protein (334 aa).

WD repeat units follow at residues 14-55, 65-104, 106-145, 152-192, 215-256, and 257-294; these read GHKD…DSEF, GHSKRINGLDVSKDGNMMVTVGSDGIGRIWDTESKKSILL, GHGRDVLCVSINSNDTKIVTGSVDRTMNLYNTKGDLVLKM, MHRG…HLQT, DESK…QSFD, and AIVPVRSIAVGETEPVIALGTDESVIIWETISSRVIAS.

The protein belongs to the WD repeat G protein beta family.

This chain is Guanine nucleotide-binding protein subunit beta-like protein, found in Encephalitozoon cuniculi (strain GB-M1) (Microsporidian parasite).